The sequence spans 198 residues: Inosine triphosphate pyrophosphatase (198 aa).

Ala-2 is modified (N-acetylalanine). 14–19 (TGNAKK) is an ITP binding site. Glu-44 serves as a coordination point for Mg(2+). ITP-binding positions include Lys-56, 72-73 (DT), and Lys-89. Ser-146 carries the post-translational modification Phosphoserine. ITP is bound by residues 149-152 (FGWD), Lys-172, and 177-178 (HR).

It belongs to the HAM1 NTPase family. As to quaternary structure, homodimer. Mg(2+) serves as cofactor. The cofactor is Mn(2+).

It localises to the cytoplasm. It carries out the reaction ITP + H2O = IMP + diphosphate + H(+). The catalysed reaction is dITP + H2O = dIMP + diphosphate + H(+). It catalyses the reaction XTP + H2O = XMP + diphosphate + H(+). The enzyme catalyses N(6)-hydroxy-dATP + H2O = N(6)-hydroxy-dAMP + diphosphate + H(+). In terms of biological role, pyrophosphatase that hydrolyzes the non-canonical purine nucleotides inosine triphosphate (ITP), deoxyinosine triphosphate (dITP) as well as 2'-deoxy-N-6-hydroxylaminopurine triphosphate (dHAPTP) and xanthosine 5'-triphosphate (XTP) to their respective monophosphate derivatives. The enzyme does not distinguish between the deoxy- and ribose forms. Probably excludes non-canonical purines from RNA and DNA precursor pools, thus preventing their incorporation into RNA and DNA and avoiding chromosomal lesions. In Rattus norvegicus (Rat), this protein is Inosine triphosphate pyrophosphatase (Itpa).